The primary structure comprises 1122 residues: TSET complex member tstF (1122 aa).

A compositionally biased stretch (low complexity) spans 88 to 126 (SSSASGINGTNNNNSGSNSSNNNNNNNGSLSNSPNNNNN). 2 disordered regions span residues 88–131 (SSSA…AFIG) and 178–215 (QTLH…STNS). Over residues 178–190 (QTLHNRSPNNTIK) the composition is skewed to polar residues. Residues 191-215 (LSPNSSNNDSLNNNNNNINNNSTNS) show a composition bias toward low complexity. WD repeat units follow at residues 298–337 (FENK…IEKQ), 342–381 (PKGT…LATQ), and 383–422 (SKVH…EVSK). Positions 731-775 (NGSVGGSSSNNSANSNNSNNNNNNNNNNSNNSNNNNNSSQPILEP) are disordered.

In terms of assembly, component of the TSET complex, a heterohexamer composed of tstA, tstB, tstC, tstD, tstE and tstF, which may act in plasma membrane turnover. tstA, tstB, tstC and tstD are likely to be the core complex members with tstE and tstF acting as associated scaffold proteins.

This chain is TSET complex member tstF, found in Dictyostelium discoideum (Social amoeba).